The chain runs to 78 residues: Small ribosomal subunit protein bS18 (78 aa).

It belongs to the bacterial ribosomal protein bS18 family. Part of the 30S ribosomal subunit. Forms a tight heterodimer with protein bS6.

In terms of biological role, binds as a heterodimer with protein bS6 to the central domain of the 16S rRNA, where it helps stabilize the platform of the 30S subunit. In Pediococcus pentosaceus (strain ATCC 25745 / CCUG 21536 / LMG 10740 / 183-1w), this protein is Small ribosomal subunit protein bS18.